The primary structure comprises 570 residues: Nucleoprotein (570 aa).

Residues 54–241 are binding site for the cap structure m7GTP; the sequence is MRKDKRNDSD…IDVSKSSINV (188 aa). The tract at residues 342-361 is disordered; it reads IDLSQNKQMSPAKPKGAGHG. Mn(2+) contacts are provided by Asp-390 and Glu-392. Zn(2+)-binding residues include Glu-400, Cys-507, His-510, and Cys-530. Asp-534 contacts Mn(2+).

Belongs to the arenaviridae nucleocapsid protein family. In terms of assembly, homomultimerizes to form the nucleocapsid. Binds to viral genomic RNA. Interacts with glycoprotein G2. Interacts with protein Z; this interaction probably directs the encapsidated genome to budding sites. Interacts with protein L; this interaction does not interfere with Z-L interaction. Interacts with host IKBKE (via Protein kinase domain); the interaction inhibits IKBKE kinase activity.

The protein localises to the virion. It is found in the host cytoplasm. Its function is as follows. Encapsidates the genome, protecting it from nucleases. The encapsidated genomic RNA is termed the nucleocapsid (NC). Serves as template for viral transcription and replication. The increased presence of protein N in host cell does not seem to trigger the switch from transcription to replication as observed in other negative strain RNA viruses. Through the interaction with host IKBKE, strongly inhibits the phosphorylation and nuclear translocation of host IRF3, a protein involved in interferon activation pathway, leading to the inhibition of interferon-beta and IRF3-dependent promoters activation. Also encodes a functional 3'-5' exoribonuclease that degrades preferentially dsRNA substrates and thereby participates in the suppression of interferon induction. In Praomys (African soft-furred rats), this protein is Nucleoprotein.